Consider the following 104-residue polypeptide: MSEFKNVTLIKKANVYYDGKVTSRTVIFADGTKKTLGIMMPGEYTFDTAAAEVMEMLGGSMEVLLPGAETWQSFHEGQSFEVPANSQFSLKIKEVADYCCSYLK.

The protein belongs to the nucleoside phosphorylase PpnP family.

The catalysed reaction is a purine D-ribonucleoside + phosphate = a purine nucleobase + alpha-D-ribose 1-phosphate. It catalyses the reaction adenosine + phosphate = alpha-D-ribose 1-phosphate + adenine. The enzyme catalyses cytidine + phosphate = cytosine + alpha-D-ribose 1-phosphate. It carries out the reaction guanosine + phosphate = alpha-D-ribose 1-phosphate + guanine. The catalysed reaction is inosine + phosphate = alpha-D-ribose 1-phosphate + hypoxanthine. It catalyses the reaction thymidine + phosphate = 2-deoxy-alpha-D-ribose 1-phosphate + thymine. The enzyme catalyses uridine + phosphate = alpha-D-ribose 1-phosphate + uracil. It carries out the reaction xanthosine + phosphate = alpha-D-ribose 1-phosphate + xanthine. Functionally, catalyzes the phosphorolysis of diverse nucleosides, yielding D-ribose 1-phosphate and the respective free bases. Can use uridine, adenosine, guanosine, cytidine, thymidine, inosine and xanthosine as substrates. Also catalyzes the reverse reactions. The polypeptide is Pyrimidine/purine nucleoside phosphorylase (Syntrophotalea carbinolica (strain DSM 2380 / NBRC 103641 / GraBd1) (Pelobacter carbinolicus)).